A 28-amino-acid polypeptide reads, in one-letter code: Potassium channel toxin alpha-KTx 13.2 (28 aa).

3 disulfide bridges follow: Cys2–Cys19, Cys6–Cys24, and Cys10–Cys26. Residues 17 to 24 (IKCINGSC) are interaction with Ca(2+)-activated K(+) channels.

Belongs to the short scorpion toxin superfamily. Potassium channel inhibitor family. Alpha-KTx 13 subfamily. Expressed by the venom gland.

Its subcellular location is the secreted. Potent and selective inhibitor of Kv1.2/KCNA2 potassium channels. The protein is Potassium channel toxin alpha-KTx 13.2 of Orthochirus scrobiculosus (Central Asian scorpion).